We begin with the raw amino-acid sequence, 181 residues long: MKPKKNQYQQMQAFDNMQGYQPQFGANPYPQQGQGSQMQTMGMQPMMPMQQGQQGQQGQQGFGFPGQQQGGGFQIPSGPTPSGPGQSVPGMLPVEESYIENILRLNRGKTATIYMTFENSKEWGSKIFRGVIEAAGRDHIIISDPKSGTRYLLLTIYLDYITFDEEIAYTYPYSMASYSPR.

Isoglutamyl lysine isopeptide (Lys-Gln) (interchain with Q-?) cross-links involve residues Lys2, Lys4, and Lys5. Residues 19-89 (GYQPQFGANP…TPSGPGQSVP (71 aa)) form a disordered region. Low complexity predominate over residues 30-57 (PQQGQGSQMQTMGMQPMMPMQQGQQGQQ). Over residues 58–73 (GQQGFGFPGQQQGGGF) the composition is skewed to gly residues.

Multimer. Is cross-linked by Tgl and YabG into an insoluble high-molecular-mass complex that appears very late in sporulation. Post-translationally, three N-terminal lysines form epsilon-(gamma-glutamyl)lysine isopeptide bonds with glutamines of other spore coat proteins.

It localises to the spore coat. Functionally, essential for the localization of CwlJ in the spore coat and for spore germination triggered by calcium and dipicolinic acid (DPA). Its assembly into the spore coat is dependent on the coat morphogenetic proteins CotE and SpoIVA. The protein is Spore coat protein GerQ (gerQ) of Bacillus subtilis (strain 168).